The primary structure comprises 644 residues: Sodium/hydrogen exchanger 9 (644 aa).

Topologically, residues 1-20 (MAGQLRFTSGKDEDHFQHQG) are lumenal. The chain crosses the membrane as a helical span at residues 21 to 41 (AVELLAFNFLLILTILTIWLF). Topologically, residues 42–45 (KNHR) are cytoplasmic. A helical transmembrane segment spans residues 46 to 66 (FRFLHETGGAMVYGLIMGLIL). Residues 67 to 126 (RYATAPTDIDSGTVYNCGNLFFSPSTLLVNITDQVYEYKYQREINQHNISPHQGNAILEK) are Lumenal-facing. A helical transmembrane segment spans residues 127-147 (MTFDPEIFFNVLLPPIIFHAG). The Cytoplasmic segment spans residues 148–164 (YSLKKRHFFQNLGSILT). A helical membrane pass occupies residues 165 to 185 (YAFLGTAISCVVIGLIMYGFV). Over 186 to 203 (KAMVHAGQLKSGDFHFTD) the chain is Lumenal. The helical transmembrane segment at 204–224 (CLFFGSLMSATDPVTVLAIFH) threads the bilayer. Over 225–235 (ELHVDPDLYTL) the chain is Cytoplasmic. Residues 236–256 (LFGESVLNDAVAIVLTYSISI) form a helical membrane-spanning segment. Topologically, residues 257–277 (YSPKENPNAFDTAAFFQSVGN) are lumenal. A helical membrane pass occupies residues 278–298 (FLGIFAGSFAMGSAYAVVTAL). Residues 299–309 (LTKFTKLREFP) are Cytoplasmic-facing. Residues 310–327 (MLETGLFFLLSWSAFLSA) form a helical membrane-spanning segment. Residues 328–333 (EAAGLT) are Lumenal-facing. The chain crosses the membrane as a helical span at residues 334 to 350 (GIVAVLFCGVTQAHYTY). Over 351-364 (NNLSSDSKLRTKQL) the chain is Cytoplasmic. A helical membrane pass occupies residues 365 to 385 (FEFMNFLAENVIFCYMGLALF). Thr-386 is a topological domain (lumenal). The chain crosses the membrane as a helical span at residues 387-407 (FQNHIFNALFILGAFLAIFVA). Over 408–429 (RACNIYPLSFLLNLGRKQKIPW) the chain is Cytoplasmic. A helical transmembrane segment spans residues 430-450 (NFQHMMMFSGLRGAIAFALAI). At 451–465 (RNTESQPKQMMFTTT) the chain is on the lumenal side. A helical transmembrane segment spans residues 466–486 (LLLVFFTVWVFGGGTTPMLTW). Residues 487 to 644 (LQIRVGVDLD…EQTRGQPQMD (158 aa)) are Cytoplasmic-facing. The disordered stretch occupies residues 590-644 (YQEQSPSPSSPTTKLALDQKSSGQTPGKENIYEGDLGLGGYDLKLEQTRGQPQMD).

The protein belongs to the monovalent cation:proton antiporter 1 (CPA1) transporter (TC 2.A.36) family. Homodimer; phosphatidylinositol-4,5-bisphosphate (PIP2) and phosphatidylinositol 3,4,5-trisphosphate (PIP3) could be involved in the dimer stabilization. Interacts (via the C-terminus) with RACK1. Interacts with CHP1. Expressed in the brain. Highly expressed in immune cells, specifically macrophages.

The protein localises to the late endosome membrane. It is found in the cell membrane. Its subcellular location is the early endosome membrane. It localises to the recycling endosome membrane. The protein resides in the cytoplasmic vesicle. The protein localises to the phagosome membrane. It carries out the reaction Na(+)(in) + H(+)(out) = Na(+)(out) + H(+)(in). It catalyses the reaction K(+)(in) + H(+)(out) = K(+)(out) + H(+)(in). In terms of biological role, endosomal Na(+), K(+)/H(+) antiporter. Mediates the electroneutral exchange of endosomal luminal H(+) for a cytosolic Na(+) or K(+). By facilitating proton efflux, SLC9A9 counteracts the acidity generated by vacuolar (V)-ATPase, thereby limiting luminal acidification. Regulates organellar pH and consequently, endosome maturation and endocytic trafficking of plasma membrane receptors and neurotransporters. Promotes the recycling of transferrin receptors back to the cell surface to facilitate additional iron uptake in the brain. Regulates synaptic transmission by regulating the luminal pH of axonal endosomes. Regulates phagosome lumenal pH, thus affecting phagosome maturation, and consequently, microbicidal activity in macrophages. Can also be active at the cell surface of specialized cells, e.g., in the inner ear hair bundles uses the high K(+) of the endolymph to regulate intracelular pH. This is Sodium/hydrogen exchanger 9 (Slc9a9) from Mus musculus (Mouse).